The chain runs to 206 residues: Small ribosomal subunit protein uS4 (206 aa).

In terms of domain architecture, S4 RNA-binding spans 96-160; the sequence is CRLDNVVYRM…AQLRIVQALE (65 aa).

This sequence belongs to the universal ribosomal protein uS4 family. Part of the 30S ribosomal subunit. Contacts protein S5. The interaction surface between S4 and S5 is involved in control of translational fidelity.

In terms of biological role, one of the primary rRNA binding proteins, it binds directly to 16S rRNA where it nucleates assembly of the body of the 30S subunit. Functionally, with S5 and S12 plays an important role in translational accuracy. The polypeptide is Small ribosomal subunit protein uS4 (Pseudomonas putida (strain GB-1)).